The sequence spans 90 residues: Probable Fe(2+)-trafficking protein (90 aa).

It belongs to the Fe(2+)-trafficking protein family.

Functionally, could be a mediator in iron transactions between iron acquisition and iron-requiring processes, such as synthesis and/or repair of Fe-S clusters in biosynthetic enzymes. This Pseudomonas putida (strain ATCC 700007 / DSM 6899 / JCM 31910 / BCRC 17059 / LMG 24140 / F1) protein is Probable Fe(2+)-trafficking protein.